We begin with the raw amino-acid sequence, 864 residues long: MTTQSSSDGRMFTSSIIPVIPDSSPTAAEVIELSSQLSLPSPTSLLDFLSTSTSRGPTRSDTVGDKTQGKEVLDTRPILENSFRRENRVVTGTGGKAATGKRLKRRTESPGNACQSKIHIVSGEQIILGQSRPEKKAAKTKRTKKEDGLINYKLHGRVSKANQTVSRQPETKISAPKECNDTTQPAGNDHINDLDDGLQLEQATQRRFDWTPTKDTTIPVIDLVGDSPSSCEKSLSGMRSTRTMLSNYEFSGVVGTLGGSRSEGTPDAPTTKRPIELLKVNNFKEISGLSDDRQSSITEDSESATSKPRRVKAKNRPKSKLTTITSYATAKYTVVEKSVNLDPVETLLSDEPGKEKSAAKRTSGARCAKPGRKKSTTTEKKNEPPIFKVVHPLEAFKAFGGQELLFGTSSQLANGHSEDQHEQNEGTSHISNSSAFLPLSRSESSSKALSQASLGSGFLKLSSSKNLWSAGARDLTGAVLEIDEIDLSEHRMKPSIFAFQPKAPLGCKADTQIPPQLGEIDSDNSCQKPLAAIDPPEFVTRSETPSEKGVLHKYIVKPTHTNSCSQSGSSISVGSPEKPVQDKPIFNGFTTSELAKKVAAYGFKPIKSRDKMISLLEKCWENRNKAPNSVPKLTPGDGLSKVDEPTKGQSLGPHLQPNSISQKATTQVPKVKPAKRATKSQGVPVSSRRSTSTSKVSRKRTVSPSAILVDDDQTSDSTGDSVPPSRPRQPSKSCTPRDRENTPESFNLPTTPLTIRSGKVPSTVTSSESLPSLYTQITAAIKAQPRLRAFNGVKQPTWYEKILMYDPIQLEDLAVWLNTDGFERIGEDREVWPGLLREWCESKGVCCIWRKQRGARAHCPLVRA.

Disordered regions lie at residues 1–21, 49–69, 91–113, 161–190, 289–318, 346–385, 413–433, and 625–767; these read MTTQ…PVIP, LSTS…KTQG, TGTG…PGNA, ANQT…GNDH, LSDD…NRPK, TLLS…NEPP, ANGH…ISNS, and KAPN…VTSS. A compositionally biased stretch (polar residues) spans 295 to 306; that stretch reads SSITEDSESATS. The segment covering 307–318 has biased composition (basic residues); the sequence is KPRRVKAKNRPK. Polar residues predominate over residues 656–668; that stretch reads QPNSISQKATTQV. Low complexity predominate over residues 685–695; that stretch reads VSSRRSTSTSK. Over residues 743-767 the composition is skewed to polar residues; sequence PESFNLPTTPLTIRSGKVPSTVTSS.

The protein belongs to the SLX4 family. As to quaternary structure, forms a heterodimer with SLX1. Phosphorylated in response to DNA damage.

The protein localises to the nucleus. Functionally, regulatory subunit of the SLX1-SLX4 structure-specific endonuclease that resolves DNA secondary structures generated during DNA repair and recombination. Has endonuclease activity towards branched DNA substrates, introducing single-strand cuts in duplex DNA close to junctions with ss-DNA. This Paracoccidioides lutzii (strain ATCC MYA-826 / Pb01) (Paracoccidioides brasiliensis) protein is Structure-specific endonuclease subunit SLX4.